A 293-amino-acid polypeptide reads, in one-letter code: Mycothiol S-conjugate amidase (293 aa).

Zn(2+)-binding residues include H13, D16, and H144.

It belongs to the MshB deacetylase family. Mca subfamily. Monomer. It depends on Zn(2+) as a cofactor.

It catalyses the reaction mycothiol S-conjugate + H2O = an N-acetyl-L-cysteine-S-conjugate + 1D-myo-inositol 2-amino-2-deoxy-alpha-D-glucopyranoside. A mycothiol (MSH, N-acetylcysteinyl-glucosaminyl-inositol) S-conjugate amidase, it recycles conjugated MSH to the N-acetyl cysteine conjugate (AcCys S-conjugate, a mercapturic acid) and the MSH precursor. Involved in MSH-dependent detoxification of a number of alkylating agents and antibiotics. The chain is Mycothiol S-conjugate amidase from Streptomyces coelicolor (strain ATCC BAA-471 / A3(2) / M145).